We begin with the raw amino-acid sequence, 258 residues long: HLA class II histocompatibility antigen, DP beta 1 chain (258 aa).

The signal sequence occupies residues 1 to 29 (MMVLQVSAAPRTVALTALLMVLLTSVVQG). The tract at residues 30-121 (RATPENYLFQ…LGGPMTLQRR (92 aa)) is beta-1. The Extracellular portion of the chain corresponds to 30 to 225 (RATPENYLFQ…KAQSDSARSK (196 aa)). Intrachain disulfides connect Cys-44–Cys-106 and Cys-144–Cys-200. The N-linked (GlcNAc...) asparagine glycan is linked to Asn-48. The segment at 122-215 (VQPRVNVSPS…SLDSPVTVEW (94 aa)) is beta-2. The 89-residue stretch at 124–212 (PRVNVSPSKK…EHTSLDSPVT (89 aa)) folds into the Ig-like C1-type domain. Residues 216–225 (KAQSDSARSK) form a connecting peptide region. The helical transmembrane segment at 226 to 246 (TLTGAGGFVLGLIICGVGIFM) threads the bilayer. The Cytoplasmic segment spans residues 247–258 (HRRSKKVQRGSA).

The protein belongs to the MHC class II family. In terms of assembly, heterodimer of an alpha and a beta subunit; also referred as MHC class II molecule. In the endoplasmic reticulum (ER) it forms a heterononamer; 3 MHC class II molecules bind to a CD74 homotrimer (also known as invariant chain or HLA class II histocompatibility antigen gamma chain). In the endosomal/lysosomal system; CD74 undergoes sequential degradation by various proteases; leaving a small fragment termed CLIP on each MHC class II molecule. MHC class II molecule interacts with HLA_DM, and HLA_DO in B-cells, in order to release CLIP and facilitate the binding of antigenic peptides.

Its subcellular location is the cell membrane. The protein localises to the endoplasmic reticulum membrane. The protein resides in the golgi apparatus. It localises to the trans-Golgi network membrane. It is found in the endosome membrane. Its subcellular location is the lysosome membrane. In terms of biological role, binds peptides derived from antigens that access the endocytic route of antigen presenting cells (APC) and presents them on the cell surface for recognition by the CD4 T-cells. The peptide binding cleft accommodates peptides of 10-30 residues. The peptides presented by MHC class II molecules are generated mostly by degradation of proteins that access the endocytic route, where they are processed by lysosomal proteases and other hydrolases. Exogenous antigens that have been endocytosed by the APC are thus readily available for presentation via MHC II molecules, and for this reason this antigen presentation pathway is usually referred to as exogenous. As membrane proteins on their way to degradation in lysosomes as part of their normal turn-over are also contained in the endosomal/lysosomal compartments, exogenous antigens must compete with those derived from endogenous components. Autophagy is also a source of endogenous peptides, autophagosomes constitutively fuse with MHC class II loading compartments. In addition to APCs, other cells of the gastrointestinal tract, such as epithelial cells, express MHC class II molecules and CD74 and act as APCs, which is an unusual trait of the GI tract. To produce a MHC class II molecule that presents an antigen, three MHC class II molecules (heterodimers of an alpha and a beta chain) associate with a CD74 trimer in the ER to form a heterononamer. Soon after the entry of this complex into the endosomal/lysosomal system where antigen processing occurs, CD74 undergoes a sequential degradation by various proteases, including CTSS and CTSL, leaving a small fragment termed CLIP (class-II-associated invariant chain peptide). The removal of CLIP is facilitated by HLA-DM via direct binding to the alpha-beta-CLIP complex so that CLIP is released. HLA-DM stabilizes MHC class II molecules until primary high affinity antigenic peptides are bound. The MHC II molecule bound to a peptide is then transported to the cell membrane surface. In B-cells, the interaction between HLA-DM and MHC class II molecules is regulated by HLA-DO. Primary dendritic cells (DCs) also to express HLA-DO. Lysosomal microenvironment has been implicated in the regulation of antigen loading into MHC II molecules, increased acidification produces increased proteolysis and efficient peptide loading. In Homo sapiens (Human), this protein is HLA class II histocompatibility antigen, DP beta 1 chain (HLA-DPB1).